A 132-amino-acid polypeptide reads, in one-letter code: Large-conductance mechanosensitive channel (132 aa).

The next 2 helical transmembrane spans lie at 11–31 (FISR…GAFG) and 75–95 (GSFL…FLLV).

It belongs to the MscL family. As to quaternary structure, homopentamer.

Its subcellular location is the cell inner membrane. Its function is as follows. Channel that opens in response to stretch forces in the membrane lipid bilayer. May participate in the regulation of osmotic pressure changes within the cell. The polypeptide is Large-conductance mechanosensitive channel (Synechococcus sp. (strain JA-2-3B'a(2-13)) (Cyanobacteria bacterium Yellowstone B-Prime)).